A 122-amino-acid polypeptide reads, in one-letter code: Ribonuclease P protein component (122 aa).

It belongs to the RnpA family. As to quaternary structure, consists of a catalytic RNA component (M1 or rnpB) and a protein subunit.

It catalyses the reaction Endonucleolytic cleavage of RNA, removing 5'-extranucleotides from tRNA precursor.. In terms of biological role, RNaseP catalyzes the removal of the 5'-leader sequence from pre-tRNA to produce the mature 5'-terminus. It can also cleave other RNA substrates such as 4.5S RNA. The protein component plays an auxiliary but essential role in vivo by binding to the 5'-leader sequence and broadening the substrate specificity of the ribozyme. This Roseiflexus sp. (strain RS-1) protein is Ribonuclease P protein component.